The chain runs to 428 residues: Histidine--tRNA ligase (428 aa).

The protein belongs to the class-II aminoacyl-tRNA synthetase family.

Its subcellular location is the cytoplasm. It catalyses the reaction tRNA(His) + L-histidine + ATP = L-histidyl-tRNA(His) + AMP + diphosphate + H(+). The chain is Histidine--tRNA ligase from Sulfolobus acidocaldarius (strain ATCC 33909 / DSM 639 / JCM 8929 / NBRC 15157 / NCIMB 11770).